We begin with the raw amino-acid sequence, 459 residues long: Antizyme inhibitor 2 (459 aa).

The segment at 117-140 (QVAQIKYAAKHGVRLLSFDNEVEL) is necessary for polyamine uptake stimulation.

The protein belongs to the Orn/Lys/Arg decarboxylase class-II family. ODC antizyme inhibitor subfamily. Monomer. Interacts with OAZ1, OAZ2 and OAZ3; this interaction disrupts the interaction between the antizyme and ODC1. Does not form a heterodimer with ODC1. Ubiquitinated, leading to its proteasomal degradation; a process that is reduced in presence of antizymes. May also be degraded through the lysosomal degradative pathway in a proteasomal-independent manner. Expressed in the medulla and chromaffin cells of the adrenal gland. Expressed in the Langerhans islets of the pancreas. Expressed in the inner part of the seminiferous tubules and in spermatozoa located in the lumen of the epididymis of the testis. Expressed in the cortex, hippocampus and cerebellum of the brain. Expressed in normal and neoplastic mast cells (MC) (at protein level). Expressed in testis, pancreas and brain. Expressed throughout the differentiation process from spermatids to spermatozoa in the inner part of the seminiferous tubules. Expressed in the kidney: expressed in the superficial (Cs) and the deep layer (Cd) of the cortex region and in the outer stripe (OS), inner stripe (IS) and the inner medulla papilla (IM) of the medulla region.

Its subcellular location is the nucleus. It is found in the cytoplasm. The protein resides in the perinuclear region. The protein localises to the membrane. It localises to the cytoplasmic vesicle. Its subcellular location is the endoplasmic reticulum-Golgi intermediate compartment. It is found in the golgi apparatus. The protein resides in the cis-Golgi network. The protein localises to the trans-Golgi network. It localises to the cytoplasmic granule. Its subcellular location is the cell projection. It is found in the axon. The protein resides in the dendrite. The protein localises to the perikaryon. Its function is as follows. Antizyme inhibitor (AZI) protein that positively regulates ornithine decarboxylase (ODC) activity and polyamine uptake. AZI is an enzymatically inactive ODC homolog that counteracts the negative effect of ODC antizymes (AZs) OAZ1, OAZ2 and OAZ3 on ODC activity by competing with ODC for antizyme-binding. Inhibits antizyme-dependent ODC degradation and releases ODC monomers from their inactive complex with antizymes, leading to formation of the catalytically active ODC homodimer and restoring polyamine production. Participates in the morphological integrity of the trans-Golgi network (TGN) and functions as a regulator of intracellular secretory vesicle trafficking. In Mus musculus (Mouse), this protein is Antizyme inhibitor 2 (Azin2).